The chain runs to 393 residues: Protein TsgA (393 aa).

Helical transmembrane passes span W11 to M31, F51 to P71, F78 to L98, A101 to I121, L134 to F154, W162 to G182, I206 to I226, A245 to L265, I273 to Q293, W298 to G318, F332 to V352, and L361 to V381.

It belongs to the major facilitator superfamily. TsgA family.

It localises to the cell inner membrane. The protein is Protein TsgA of Salmonella agona (strain SL483).